The sequence spans 308 residues: HTH-type transcriptional activator AllS (308 aa).

Residues F2–T59 form the HTH lysR-type domain. Positions F19–K38 form a DNA-binding region, H-T-H motif.

It belongs to the LysR transcriptional regulatory family.

Positive regulator essential for the expression of allD operon. Binds to the allD promoter. The chain is HTH-type transcriptional activator AllS (allS) from Escherichia coli O1:K1 / APEC.